We begin with the raw amino-acid sequence, 220 residues long: Thiamine-phosphate synthase (220 aa).

4-amino-2-methyl-5-(diphosphooxymethyl)pyrimidine contacts are provided by residues Gln-38–Lys-42 and Asn-70. Mg(2+) is bound by residues Asp-71 and Asp-90. Thr-109 contributes to the 4-amino-2-methyl-5-(diphosphooxymethyl)pyrimidine binding site. Thr-135–Ser-137 contacts 2-[(2R,5Z)-2-carboxy-4-methylthiazol-5(2H)-ylidene]ethyl phosphate. A 4-amino-2-methyl-5-(diphosphooxymethyl)pyrimidine-binding site is contributed by Lys-138. Residues Gly-171 and Ile-191 to Ser-192 each bind 2-[(2R,5Z)-2-carboxy-4-methylthiazol-5(2H)-ylidene]ethyl phosphate.

This sequence belongs to the thiamine-phosphate synthase family. It depends on Mg(2+) as a cofactor.

The catalysed reaction is 2-[(2R,5Z)-2-carboxy-4-methylthiazol-5(2H)-ylidene]ethyl phosphate + 4-amino-2-methyl-5-(diphosphooxymethyl)pyrimidine + 2 H(+) = thiamine phosphate + CO2 + diphosphate. The enzyme catalyses 2-(2-carboxy-4-methylthiazol-5-yl)ethyl phosphate + 4-amino-2-methyl-5-(diphosphooxymethyl)pyrimidine + 2 H(+) = thiamine phosphate + CO2 + diphosphate. It catalyses the reaction 4-methyl-5-(2-phosphooxyethyl)-thiazole + 4-amino-2-methyl-5-(diphosphooxymethyl)pyrimidine + H(+) = thiamine phosphate + diphosphate. Its pathway is cofactor biosynthesis; thiamine diphosphate biosynthesis; thiamine phosphate from 4-amino-2-methyl-5-diphosphomethylpyrimidine and 4-methyl-5-(2-phosphoethyl)-thiazole: step 1/1. Condenses 4-methyl-5-(beta-hydroxyethyl)thiazole monophosphate (THZ-P) and 2-methyl-4-amino-5-hydroxymethyl pyrimidine pyrophosphate (HMP-PP) to form thiamine monophosphate (TMP). The protein is Thiamine-phosphate synthase of Agrobacterium fabrum (strain C58 / ATCC 33970) (Agrobacterium tumefaciens (strain C58)).